Here is a 240-residue protein sequence, read N- to C-terminus: Ribosomal RNA large subunit methyltransferase E (240 aa).

The segment covering 1-20 has biased composition (gly residues); it reads MSKAGGNKGGSRTGGRGGAG. Positions 1–33 are disordered; the sequence is MSKAGGNKGGSRTGGRGGAGSSNLHVRVKKKAG. The S-adenosyl-L-methionine site is built by Gly-92, Trp-94, Asp-115, Asp-131, and Asp-155. Residue Lys-195 is the Proton acceptor of the active site.

It belongs to the class I-like SAM-binding methyltransferase superfamily. RNA methyltransferase RlmE family.

It is found in the cytoplasm. The catalysed reaction is uridine(2552) in 23S rRNA + S-adenosyl-L-methionine = 2'-O-methyluridine(2552) in 23S rRNA + S-adenosyl-L-homocysteine + H(+). In terms of biological role, specifically methylates the uridine in position 2552 of 23S rRNA at the 2'-O position of the ribose in the fully assembled 50S ribosomal subunit. This chain is Ribosomal RNA large subunit methyltransferase E, found in Brucella abortus (strain S19).